The following is a 463-amino-acid chain: L-seryl-tRNA(Sec) selenium transferase (463 aa).

Position 295 is an N6-(pyridoxal phosphate)lysine (lysine 295).

This sequence belongs to the SelA family. In terms of assembly, homodecamer; pentamer of dimers. Binds only one seryl-tRNA(Sec) per dimer. Pyridoxal 5'-phosphate is required as a cofactor.

It localises to the cytoplasm. The catalysed reaction is L-seryl-tRNA(Sec) + selenophosphate + H(+) = L-selenocysteinyl-tRNA(Sec) + phosphate. Its pathway is aminoacyl-tRNA biosynthesis; selenocysteinyl-tRNA(Sec) biosynthesis; selenocysteinyl-tRNA(Sec) from L-seryl-tRNA(Sec) (bacterial route): step 1/1. In terms of biological role, converts seryl-tRNA(Sec) to selenocysteinyl-tRNA(Sec) required for selenoprotein biosynthesis. This is L-seryl-tRNA(Sec) selenium transferase from Proteus mirabilis (strain HI4320).